Here is a 385-residue protein sequence, read N- to C-terminus: Multidrug resistance protein MdtE (385 aa).

A signal peptide spans 1 to 20 (MNRRRKLLIPLLFCGAMLTA). A lipid anchor (N-palmitoyl cysteine) is attached at C21. C21 is lipidated: S-diacylglycerol cysteine.

Belongs to the membrane fusion protein (MFP) (TC 8.A.1) family. Homotrimer. Part of the tripartite efflux system MdtEF-TolC, which is composed of an inner membrane transporter, MdtF, a membrane fusion protein, MdtE, and an outer membrane component, TolC. The complex forms a large protein conduit and can translocate molecules across both the inner and outer membranes.

Its subcellular location is the cell inner membrane. Its function is as follows. Part of the tripartite efflux system MdtEF-TolC, which confers resistance to various compounds. This is Multidrug resistance protein MdtE (mdtE) from Escherichia coli O157:H7.